The following is a 139-amino-acid chain: Self-incompatibility protein S1 (139 aa).

The signal sequence occupies residues 1–19; the sequence is MNIFYVIVLLSFFLSKSSG. A glycan (N-linked (GlcNAc...) asparagine) is linked at N51.

This sequence belongs to the plant self-incompatibility (S1) protein family. Post-translationally, glycosylated (S1b) and unglocosylated (S1a) forms coexist. As to expression, accumulates in the stigma (at protein level).

Its subcellular location is the secreted. Functionally, exhibits specific pollen self-inhibitory activity thus preventing self-fertilization. The polypeptide is Self-incompatibility protein S1 (Papaver rhoeas (Common poppy)).